Consider the following 678-residue polypeptide: ATP-dependent RNA helicase DHX58 (678 aa).

One can recognise a Helicase ATP-binding domain in the interval 11–188; it reads IMPALEGKNI…DGAINHVLQL (178 aa). Position 24–31 (24–31) interacts with ATP; it reads LPTGAGKT. The DECH box signature appears at 131 to 134; sequence DECH. Positions 350 to 514 constitute a Helicase C-terminal domain; it reads KLEMLEKILQ…QAVAAVQKMD (165 aa). Positions 489 to 546 form a coiled coil; sequence ELKRELINEALETLMEQAVAAVQKMDQAEYQAKIRDLQQAALTKRAAQAAQRENQRQQ. The region spanning 539–669 is the RLR CTR domain; that stretch reads QRENQRQQFP…PDFDFLQHCA (131 aa). Residues cysteine 556, cysteine 559, cysteine 612, and cysteine 615 each contribute to the Zn(2+) site. An RNA-binding region spans residues 572 to 655; sequence VEGTHHVNVN…RIQAKKWSRV (84 aa).

Belongs to the helicase family. RLR subfamily. In terms of assembly, monomer in the absence of dsRNA. Homodimer in the presence of dsRNA. Interacts with RIGI (via CARD domain), MAVS/IPS1 and DDX60. Found in a complex with RIGI and IFIH1/MDA5. Interacts with ANKRD17. Directly interacts with ATG5 and ATG12, either as ATG5 and ATG12 monomers or as ATG12-ATG5 conjugates. (Microbial infection) Interacts (via helicase C-terminal domain) with non-structural protein V of paramyxoviruses including human parainfluenza 2 virus, human parainfluenza 5 virus, measles virus, mumps virus, hendra virus and nipah virus. Expressed in testis, nerve and spleen. Also expressed in the brain.

The protein localises to the cytoplasm. The enzyme catalyses ATP + H2O = ADP + phosphate + H(+). Acts as a regulator of RIGI and IFIH1/MDA5 mediated antiviral signaling. Cannot initiate antiviral signaling as it lacks the CARD domain required for activating MAVS/IPS1-dependent signaling events. Can have both negative and positive regulatory functions related to RIGI and IFIH1/MDA5 signaling and this role in regulating signaling may be complex and could probably depend on characteristics of the infecting virus or target cells, or both. Its inhibitory action on RIG-I signaling may involve the following mechanisms: competition with RIGI for binding to the viral RNA, binding to RIGI and inhibiting its dimerization and interaction with MAVS/IPS1, competing with IKBKE in its binding to MAVS/IPS1 thereby inhibiting activation of interferon regulatory factor 3 (IRF3). Its positive regulatory role may involve unwinding or stripping nucleoproteins of viral RNA thereby facilitating their recognition by RIGI and IFIH1/MDA5. Involved in the innate immune response to various RNA viruses and some DNA viruses such as poxviruses and coronavirus SARS-CoV-2, and also to the bacterial pathogen Listeria monocytogenes. Can bind both ssRNA and dsRNA, with a higher affinity for dsRNA. Shows a preference to 5'-triphosphorylated RNA, although it can recognize RNA lacking a 5'-triphosphate. In Homo sapiens (Human), this protein is ATP-dependent RNA helicase DHX58.